A 579-amino-acid polypeptide reads, in one-letter code: Chromosomal replication initiator protein DnaA (579 aa).

The domain I, interacts with DnaA modulators stretch occupies residues 1 to 71 (MQDFWQAAAA…TALACEYWET (71 aa)). A domain II region spans residues 71–242 (TQVSVHFVLD…QQSDTVHERS (172 aa)). 2 disordered regions span residues 131-196 (AGAQ…SAAH) and 212-240 (EASA…TVHE). A compositionally biased stretch (low complexity) spans 171 to 183 (SQSQQSAQGRGAA). Residues 243 to 459 (RLNPILTFDN…GALRKILAFS (217 aa)) are domain III, AAA+ region. ATP contacts are provided by Gly-287, Gly-289, Lys-290, and Thr-291. The interval 460–579 (NFHGKDITID…LHVLEQTLKG (120 aa)) is domain IV, binds dsDNA.

The protein belongs to the DnaA family. Oligomerizes as a right-handed, spiral filament on DNA at oriC.

It is found in the cytoplasm. Functionally, plays an essential role in the initiation and regulation of chromosomal replication. ATP-DnaA binds to the origin of replication (oriC) to initiate formation of the DNA replication initiation complex once per cell cycle. Binds the DnaA box (a 9 base pair repeat at the origin) and separates the double-stranded (ds)DNA. Forms a right-handed helical filament on oriC DNA; dsDNA binds to the exterior of the filament while single-stranded (ss)DNA is stabiized in the filament's interior. The ATP-DnaA-oriC complex binds and stabilizes one strand of the AT-rich DNA unwinding element (DUE), permitting loading of DNA polymerase. After initiation quickly degrades to an ADP-DnaA complex that is not apt for DNA replication. Binds acidic phospholipids. The protein is Chromosomal replication initiator protein DnaA of Cupriavidus metallidurans (strain ATCC 43123 / DSM 2839 / NBRC 102507 / CH34) (Ralstonia metallidurans).